The chain runs to 308 residues: Oligopeptide transport ATP-binding protein OppF (308 aa).

Residues valine 9–leucine 254 enclose the ABC transporter domain. Glycine 46 to threonine 53 is an ATP binding site.

It belongs to the ABC transporter superfamily. As to quaternary structure, the complex is composed of two ATP-binding proteins (OppD and OppF), two transmembrane proteins (OppB and OppC) and a solute-binding protein (OppA).

The protein localises to the cell membrane. The enzyme catalyses a [peptide](out) + ATP + H2O = a [peptide](in) + ADP + phosphate + H(+). Part of the ABC transporter complex OppABCDF involved in the uptake of oligopeptides. Probably responsible for energy coupling to the transport system. In Streptococcus mutans serotype c (strain ATCC 700610 / UA159), this protein is Oligopeptide transport ATP-binding protein OppF (oppF).